A 215-amino-acid polypeptide reads, in one-letter code: 3-demethoxyubiquinol 3-hydroxylase (215 aa).

6 residues coordinate Fe cation: E64, E94, H97, E146, E178, and H181.

The protein belongs to the COQ7 family. Fe cation serves as cofactor.

The protein localises to the cell membrane. It catalyses the reaction a 5-methoxy-2-methyl-3-(all-trans-polyprenyl)benzene-1,4-diol + AH2 + O2 = a 3-demethylubiquinol + A + H2O. The protein operates within cofactor biosynthesis; ubiquinone biosynthesis. Functionally, catalyzes the hydroxylation of 2-nonaprenyl-3-methyl-6-methoxy-1,4-benzoquinol during ubiquinone biosynthesis. This chain is 3-demethoxyubiquinol 3-hydroxylase, found in Pseudomonas fluorescens (strain SBW25).